We begin with the raw amino-acid sequence, 140 residues long: Small ribosomal subunit protein uS19 (140 aa).

Residues 43-71 (IERGLTTEQQKLRETVRDADPQKTANDPI) form a disordered region. Over residues 52–63 (QKLRETVRDADP) the composition is skewed to basic and acidic residues.

Belongs to the universal ribosomal protein uS19 family.

Protein S19 forms a complex with S13 that binds strongly to the 16S ribosomal RNA. This is Small ribosomal subunit protein uS19 from Haloquadratum walsbyi (strain DSM 16790 / HBSQ001).